The chain runs to 486 residues: ATP synthase subunit beta (486 aa).

Position 164-171 (164-171) interacts with ATP; the sequence is GGAGVGKT.

This sequence belongs to the ATPase alpha/beta chains family. In terms of assembly, F-type ATPases have 2 components, CF(1) - the catalytic core - and CF(0) - the membrane proton channel. CF(1) has five subunits: alpha(3), beta(3), gamma(1), delta(1), epsilon(1). CF(0) has four main subunits: a(1), b(1), b'(1) and c(9-12).

The protein localises to the cellular thylakoid membrane. It catalyses the reaction ATP + H2O + 4 H(+)(in) = ADP + phosphate + 5 H(+)(out). Produces ATP from ADP in the presence of a proton gradient across the membrane. The catalytic sites are hosted primarily by the beta subunits. In Prochlorococcus marinus (strain MIT 9215), this protein is ATP synthase subunit beta.